We begin with the raw amino-acid sequence, 180 residues long: Shikimate kinase (180 aa).

An ATP-binding site is contributed by glycine 19 to threonine 24. Residue threonine 23 coordinates Mg(2+). Substrate-binding residues include aspartate 41, arginine 65, and glycine 87. Arginine 125 is an ATP binding site. Arginine 144 contacts substrate.

The protein belongs to the shikimate kinase family. As to quaternary structure, monomer. It depends on Mg(2+) as a cofactor.

The protein resides in the cytoplasm. The enzyme catalyses shikimate + ATP = 3-phosphoshikimate + ADP + H(+). It functions in the pathway metabolic intermediate biosynthesis; chorismate biosynthesis; chorismate from D-erythrose 4-phosphate and phosphoenolpyruvate: step 5/7. Its function is as follows. Catalyzes the specific phosphorylation of the 3-hydroxyl group of shikimic acid using ATP as a cosubstrate. The chain is Shikimate kinase from Acinetobacter baumannii (strain SDF).